A 979-amino-acid chain; its full sequence is Translation initiation factor IF-2 (979 aa).

Residues valine 33 to glutamate 391 form a disordered region. Low complexity-rich tracts occupy residues glutamine 54 to glutamine 63 and alanine 139 to alanine 150. A compositionally biased stretch (pro residues) spans proline 151–threonine 166. Residues proline 234 to threonine 252 are compositionally biased toward acidic residues. 2 stretches are compositionally biased toward basic residues: residues proline 263–arginine 278 and threonine 294–proline 303. The segment covering glycine 314 to leucine 328 has biased composition (polar residues). The span at lysine 371–valine 380 shows a compositional bias: basic and acidic residues. The region spanning histidine 468–serine 641 is the tr-type G domain. Residues glycine 477 to threonine 484 are G1. Glycine 477–threonine 484 serves as a coordination point for GTP. Positions glycine 502–histidine 506 are G2. The interval aspartate 527–glycine 530 is G3. GTP-binding positions include aspartate 527–histidine 531 and asparagine 581–aspartate 584. A G4 region spans residues asparagine 581–aspartate 584. Residues serine 617–leucine 619 form a G5 region.

Belongs to the TRAFAC class translation factor GTPase superfamily. Classic translation factor GTPase family. IF-2 subfamily.

Its subcellular location is the cytoplasm. In terms of biological role, one of the essential components for the initiation of protein synthesis. Protects formylmethionyl-tRNA from spontaneous hydrolysis and promotes its binding to the 30S ribosomal subunits. Also involved in the hydrolysis of GTP during the formation of the 70S ribosomal complex. The polypeptide is Translation initiation factor IF-2 (Picosynechococcus sp. (strain ATCC 27264 / PCC 7002 / PR-6) (Agmenellum quadruplicatum)).